The sequence spans 616 residues: Dihydroxy-acid dehydratase (616 aa).

Mg(2+) is bound at residue D81. Residue C122 participates in [2Fe-2S] cluster binding. Residues D123 and K124 each coordinate Mg(2+). Position 124 is an N6-carboxylysine (K124). C195 is a [2Fe-2S] cluster binding site. Position 491 (E491) interacts with Mg(2+). S517 serves as the catalytic Proton acceptor.

This sequence belongs to the IlvD/Edd family. Homodimer. The cofactor is [2Fe-2S] cluster. Requires Mg(2+) as cofactor.

It catalyses the reaction (2R)-2,3-dihydroxy-3-methylbutanoate = 3-methyl-2-oxobutanoate + H2O. It carries out the reaction (2R,3R)-2,3-dihydroxy-3-methylpentanoate = (S)-3-methyl-2-oxopentanoate + H2O. Its pathway is amino-acid biosynthesis; L-isoleucine biosynthesis; L-isoleucine from 2-oxobutanoate: step 3/4. It functions in the pathway amino-acid biosynthesis; L-valine biosynthesis; L-valine from pyruvate: step 3/4. In terms of biological role, functions in the biosynthesis of branched-chain amino acids. Catalyzes the dehydration of (2R,3R)-2,3-dihydroxy-3-methylpentanoate (2,3-dihydroxy-3-methylvalerate) into 2-oxo-3-methylpentanoate (2-oxo-3-methylvalerate) and of (2R)-2,3-dihydroxy-3-methylbutanoate (2,3-dihydroxyisovalerate) into 2-oxo-3-methylbutanoate (2-oxoisovalerate), the penultimate precursor to L-isoleucine and L-valine, respectively. This is Dihydroxy-acid dehydratase from Salmonella heidelberg (strain SL476).